We begin with the raw amino-acid sequence, 100 residues long: UPF0213 protein YhbQ (100 aa).

In terms of domain architecture, GIY-YIG spans 2-77 (TPWFLYLIRT…KQLTKRQKER (76 aa)).

Belongs to the UPF0213 family.

The sequence is that of UPF0213 protein YhbQ from Escherichia coli O139:H28 (strain E24377A / ETEC).